We begin with the raw amino-acid sequence, 389 residues long: Succinate--CoA ligase [ADP-forming] subunit beta (389 aa).

The ATP-grasp domain occupies 9–244 (KQILRKYGIP…PSQMSNNEAR (236 aa)). Residues lysine 46, 53-55 (GRG), isoleucine 102, and glutamate 107 contribute to the ATP site. Mg(2+) contacts are provided by asparagine 199 and aspartate 213. Residues asparagine 264 and 321-323 (GIM) each bind substrate.

It belongs to the succinate/malate CoA ligase beta subunit family. Heterotetramer of two alpha and two beta subunits. It depends on Mg(2+) as a cofactor.

The catalysed reaction is succinate + ATP + CoA = succinyl-CoA + ADP + phosphate. The enzyme catalyses GTP + succinate + CoA = succinyl-CoA + GDP + phosphate. The protein operates within carbohydrate metabolism; tricarboxylic acid cycle; succinate from succinyl-CoA (ligase route): step 1/1. Succinyl-CoA synthetase functions in the citric acid cycle (TCA), coupling the hydrolysis of succinyl-CoA to the synthesis of either ATP or GTP and thus represents the only step of substrate-level phosphorylation in the TCA. The beta subunit provides nucleotide specificity of the enzyme and binds the substrate succinate, while the binding sites for coenzyme A and phosphate are found in the alpha subunit. The polypeptide is Succinate--CoA ligase [ADP-forming] subunit beta (Protochlamydia amoebophila (strain UWE25)).